Here is a 4246-residue protein sequence, read N- to C-terminus: Intermembrane lipid transfer protein vps13F (4246 aa).

The Chorein N-terminal domain occupies Phe-2–Leu-113. Disordered stretches follow at residues Ile-141–Asp-271, Pro-401–Lys-420, Lys-591–Gly-759, Val-914–Leu-944, Lys-964–Glu-1014, Gln-1217–Pro-1251, Ile-1356–Asp-1379, Tyr-1395–Lys-1436, Arg-1622–Ser-1683, Leu-2101–Gln-2131, His-2211–Lys-2237, Gln-2471–Gln-2513, Leu-2704–Lys-2756, Ile-3421–Leu-3449, Lys-3611–Asn-3652, and Asn-3794–Glu-3813. Positions Asn-168 to Leu-201 are enriched in low complexity. Positions Asn-207–Asp-217 are enriched in basic and acidic residues. A compositionally biased stretch (acidic residues) spans Thr-218–Asp-271. Composition is skewed to low complexity over residues Pro-401–Pro-413 and Gln-597–Thr-658. Residues Asp-659–Gly-668 are compositionally biased toward basic and acidic residues. Low complexity predominate over residues Asp-669–Asp-680. Over residues Asn-681–Asn-702 the composition is skewed to basic and acidic residues. Low complexity-rich tracts occupy residues Ser-725 to Gln-747 and Val-914 to Pro-924. 2 stretches are compositionally biased toward basic and acidic residues: residues Ser-925–Leu-944 and Asp-987–Ser-1001. The span at Gln-1217–Asn-1241 shows a compositional bias: low complexity. Acidic residues predominate over residues Ser-1400–Asn-1409. Basic and acidic residues-rich tracts occupy residues Asp-1410–Lys-1431 and Arg-1622–Asn-1634. Residues Gln-1644–Gln-1670 show a composition bias toward low complexity. 5 stretches are compositionally biased toward low complexity: residues Gln-2471–Asn-2506, Ser-2705–Thr-2755, Asp-3430–Leu-3449, Leu-3613–Asn-3652, and Asn-3794–Asn-3809.

The protein belongs to the VPS13 family.

It localises to the membrane. Functionally, mediates the transfer of lipids between membranes at organelle contact sites. The sequence is that of Intermembrane lipid transfer protein vps13F (vps13F) from Dictyostelium discoideum (Social amoeba).